The chain runs to 400 residues: LIM/homeobox protein Lhx3 (400 aa).

LIM zinc-binding domains follow at residues 34 to 84 (CAGC…CKDD) and 93 to 147 (CAAC…CKAD). Ser74 carries the post-translational modification Phosphoserine. A DNA-binding region (homeobox) is located at residues 160–219 (AKRPRTTITAKQLETLKSAYNTSPKPARHVREQLSSETGLDMRVVQVWFQNRRAKEKRLK). Disordered regions lie at residues 215–280 (EKRL…SSLG) and 297–400 (TLDH…HAQF). At Tyr230 the chain carries Phosphotyrosine. Phosphoserine is present on residues Ser237 and Ser241. Composition is skewed to pro residues over residues 319–334 (GIPP…PGPQ) and 352–361 (SGPPGGPPPM). Residues 368–380 (GPSSDLSTESSSG) show a composition bias toward polar residues.

As to quaternary structure, interacts with POU1F1. At neuronal promoters, interacts with LDB1, in motor neurons LDB1 is displaced by ISL1 and a ternary complex is formed in which ISL1 contacts both LHX3 and LDB1; allosteric structural changes in the DNA binding domain of LHX3, induced by the ISL1-LHX3 interaction, may explain differences in sequence specificity of the different complexes. Interacts with LDB2. May interact with CITED2/MRG1. In terms of tissue distribution, mostly expressed in the pituitary anterior and intermediate lobes. It is also expressed in the pineal gland and transiently in the primordia of motor neurons including the spinal cord, pons and medulla oblongata.

It is found in the nucleus. Transcription factor. Recognizes and binds to the consensus sequence motif 5'-AATTAATTA-3' in the regulatory elements of target genes, such as glycoprotein hormones alpha chain CGA and visual system homeobox CHX10, positively modulating transcription; transcription can be co-activated by LDB2. Synergistically enhances transcription from the prolactin promoter in cooperation with POU1F1/Pit-1. Required for the establishment of the specialized cells of the pituitary gland and the nervous system. Involved in the development of interneurons and motor neurons in cooperation with LDB1 and ISL1. The chain is LIM/homeobox protein Lhx3 (Lhx3) from Mus musculus (Mouse).